Reading from the N-terminus, the 85-residue chain is Anti-neuroexcitation peptide 2 (85 aa).

The N-terminal stretch at Met-1–Ala-21 is a signal peptide. Residues Asp-22–Gly-82 form the LCN-type CS-alpha/beta domain. 4 cysteine pairs are disulfide-bonded: Cys-31-Cys-81, Cys-35-Cys-56, Cys-42-Cys-63, and Cys-46-Cys-65.

This sequence belongs to the long (4 C-C) scorpion toxin superfamily. Sodium channel inhibitor family. Beta subfamily. Expressed by the venom gland.

Its subcellular location is the secreted. Binds to sodium channels (Nav) and inhibits them. Recombinant ANEP delays the convulsion seizure of insect models by 18% and shows anti-neuroexcitatory activity. This Olivierus martensii (Manchurian scorpion) protein is Anti-neuroexcitation peptide 2.